The primary structure comprises 95 residues: Co-chaperonin GroES (95 aa).

Belongs to the GroES chaperonin family. Heptamer of 7 subunits arranged in a ring. Interacts with the chaperonin GroEL.

It is found in the cytoplasm. Together with the chaperonin GroEL, plays an essential role in assisting protein folding. The GroEL-GroES system forms a nano-cage that allows encapsulation of the non-native substrate proteins and provides a physical environment optimized to promote and accelerate protein folding. GroES binds to the apical surface of the GroEL ring, thereby capping the opening of the GroEL channel. In Geobacter sulfurreducens (strain ATCC 51573 / DSM 12127 / PCA), this protein is Co-chaperonin GroES.